An 865-amino-acid chain; its full sequence is Fatty acyl-CoA synthetase and RNA processing-associated kinase 1 (865 aa).

The Protein kinase domain maps to Tyr-41 to Leu-313. Residues Leu-47 to Val-55 and Lys-80 contribute to the ATP site. The active-site Proton acceptor is the Asp-175. Residues Lys-341–Ser-398 form a disordered region. A compositionally biased stretch (low complexity) spans Ser-352–Ser-361. The residue at position 441 (Ser-441) is a Phosphoserine. Disordered regions lie at residues Ile-480 to Pro-554, Thr-673 to Ala-733, and Ser-754 to Asn-782. Residues Ser-494–His-538 show a composition bias toward polar residues. 2 stretches are compositionally biased toward basic and acidic residues: residues Glu-690–Ser-708 and Asn-724–Ala-733.

The protein belongs to the protein kinase superfamily. Ser/Thr protein kinase family. In terms of assembly, interacts with FAA3, POL5 and TPA1.

The protein localises to the cytoplasm. The catalysed reaction is L-seryl-[protein] + ATP = O-phospho-L-seryl-[protein] + ADP + H(+). It catalyses the reaction L-threonyl-[protein] + ATP = O-phospho-L-threonyl-[protein] + ADP + H(+). In terms of biological role, putative serine/threonine-protein kinase that may be involved in rRNA transcription and ribosome biogenesis. The sequence is that of Fatty acyl-CoA synthetase and RNA processing-associated kinase 1 (FRK1) from Saccharomyces cerevisiae (strain ATCC 204508 / S288c) (Baker's yeast).